The following is a 278-amino-acid chain: Transmembrane protein 45B (278 aa).

The next 7 helical transmembrane spans lie at 7–27 (HALP…KYPL), 49–69 (IIEG…EQFV), 95–115 (YLFF…FHIV), 117–137 (LGLD…LFYF), 149–169 (IHSL…LEVI), 183–203 (LLIL…PPFG), and 215–235 (IMFI…IVAI). Residues serine 273 and serine 275 each carry the phosphoserine modification.

Belongs to the TMEM45 family.

The protein localises to the endosome membrane. Its subcellular location is the lysosome membrane. The protein resides in the golgi apparatus. It is found in the trans-Golgi network membrane. Functionally, plays a role in innate immunity. The sequence is that of Transmembrane protein 45B (Tmem45b) from Mus musculus (Mouse).